A 258-amino-acid chain; its full sequence is Casein kinase II subunit beta' (258 aa).

Residues 1–10 are compositionally biased toward polar residues; sequence MGSRSENVGT. The tract at residues 1 to 29 is disordered; it reads MGSRSENVGTVTREGSRVEQDDVLMDDDS.

Belongs to the casein kinase 2 subunit beta family. In terms of assembly, tetramer composed of an alpha subunit, an alpha' subunit, one beta subunit and one beta' subunit. Interacts with FACT subunits POB3 and SPT16. Interaction with YTA7. Phosphorylated by alpha subunit. In terms of processing, the N-terminus is blocked.

Regulatory subunit of casein kinase II/CK2. As part of the kinase complex regulates the basal catalytic activity of the alpha subunit a constitutively active serine/threonine-protein kinase that phosphorylates a large number of substrates containing acidic residues C-terminal to the phosphorylated serine or threonine. This chain is Casein kinase II subunit beta', found in Saccharomyces cerevisiae (strain ATCC 204508 / S288c) (Baker's yeast).